The following is a 498-amino-acid chain: ATP synthase subunit beta, chloroplastic (498 aa).

172-179 is an ATP binding site; sequence GGAGVGKT.

It belongs to the ATPase alpha/beta chains family. F-type ATPases have 2 components, CF(1) - the catalytic core - and CF(0) - the membrane proton channel. CF(1) has five subunits: alpha(3), beta(3), gamma(1), delta(1), epsilon(1). CF(0) has four main subunits: a(1), b(1), b'(1) and c(9-12).

Its subcellular location is the plastid. It is found in the chloroplast thylakoid membrane. The enzyme catalyses ATP + H2O + 4 H(+)(in) = ADP + phosphate + 5 H(+)(out). Its function is as follows. Produces ATP from ADP in the presence of a proton gradient across the membrane. The catalytic sites are hosted primarily by the beta subunits. The protein is ATP synthase subunit beta, chloroplastic of Solanum bulbocastanum (Wild potato).